The chain runs to 501 residues: MTDIAAPPAPGTSPVRVRFCPSPTGTPHVGLIRTALFNWAHARHTGGTFVFRIEDTDAARDSEESYAQILDALDWLGLDWDEGIGVGGPHEPYRQSLRRPVYDDVVRRLREAGHLYESFSTAEEIEARHEAAGRPKVLGYDGFDRDLTPEQVAAFRAEGREPTLRLRLPEGRDYSFDDVVRGRIEFKAGSFPDPVLVRANGDPLYTLVNPVDDALMGITHVLRGEDLLSSTPRQIALHEALVDIGVSQAVPLFGHLPYVTGEGSKKLSKRDPESNLFHHRDRGFIREGLLNYLALLGWGISEDRDVFSVEEMVAAFDVADVNASPARFDVAKAEAINAAHLRLLAPEDFRGRLVPYLQAAGVLPAQPSPEQLERLAAAAPLVQERMTLLGQAPGMLGFLFVADGDVVLEPDATAALRPEAADVLDASLAALEALTGWTTADLEAALRAAVVEGLGVKPKFAFAPLRTAVTGRRVSPPLFESMEILGRESSLARLRRLRATL.

Positions proline 21–leucine 31 match the 'HIGH' region motif. A 'KMSKS' region motif is present at residues lysine 266–arginine 270. Lysine 269 serves as a coordination point for ATP.

It belongs to the class-I aminoacyl-tRNA synthetase family. Glutamate--tRNA ligase type 1 subfamily. As to quaternary structure, monomer.

The protein resides in the cytoplasm. The catalysed reaction is tRNA(Glu) + L-glutamate + ATP = L-glutamyl-tRNA(Glu) + AMP + diphosphate. Catalyzes the attachment of glutamate to tRNA(Glu) in a two-step reaction: glutamate is first activated by ATP to form Glu-AMP and then transferred to the acceptor end of tRNA(Glu). In Kineococcus radiotolerans (strain ATCC BAA-149 / DSM 14245 / SRS30216), this protein is Glutamate--tRNA ligase.